A 197-amino-acid chain; its full sequence is NADH-quinone oxidoreductase subunit C (197 aa).

This sequence belongs to the complex I 30 kDa subunit family. As to quaternary structure, NDH-1 is composed of 14 different subunits. Subunits NuoB, C, D, E, F, and G constitute the peripheral sector of the complex.

It is found in the cell inner membrane. It carries out the reaction a quinone + NADH + 5 H(+)(in) = a quinol + NAD(+) + 4 H(+)(out). NDH-1 shuttles electrons from NADH, via FMN and iron-sulfur (Fe-S) centers, to quinones in the respiratory chain. The immediate electron acceptor for the enzyme in this species is believed to be ubiquinone. Couples the redox reaction to proton translocation (for every two electrons transferred, four hydrogen ions are translocated across the cytoplasmic membrane), and thus conserves the redox energy in a proton gradient. The protein is NADH-quinone oxidoreductase subunit C of Neisseria gonorrhoeae (strain ATCC 700825 / FA 1090).